Here is a 271-residue protein sequence, read N- to C-terminus: MNMLTEAAVEKALDHKMSNVPYKMIGKDVSVYYGEKRALFDVNLNVRENTVTALIGPSGCGKSTFLRCLNRMNDTIDGCRVTGKITLDTDDVYDPDIDVVELRARVGMVFQKPNPFPKTIYENVSYGPRIHGLAKSKADLDQIVETSLQRAGLWNEVKDRVHESGTGLSGGQQQRLCIARAVAVSPEVILMDEPCSALDPIATAKVEELIHELRENYTIVIVTHSMQQAARVSQRTAMFHLGNLVEENDTDKMFTNPDDPRTQDYIMGRFG.

Positions M24–I266 constitute an ABC transporter domain. Residue G56 to S63 coordinates ATP.

The protein belongs to the ABC transporter superfamily. Phosphate importer (TC 3.A.1.7) family. The complex is composed of two ATP-binding proteins (PstB), two transmembrane proteins (PstC and PstA) and a solute-binding protein (PstS).

The protein resides in the cell inner membrane. The catalysed reaction is phosphate(out) + ATP + H2O = ADP + 2 phosphate(in) + H(+). Functionally, part of the ABC transporter complex PstSACB involved in phosphate import. Responsible for energy coupling to the transport system. This chain is Phosphate import ATP-binding protein PstB 1, found in Rhizobium johnstonii (strain DSM 114642 / LMG 32736 / 3841) (Rhizobium leguminosarum bv. viciae).